The chain runs to 287 residues: Ribosomal RNA small subunit methyltransferase I (287 aa).

It belongs to the methyltransferase superfamily. RsmI family.

The protein localises to the cytoplasm. It catalyses the reaction cytidine(1402) in 16S rRNA + S-adenosyl-L-methionine = 2'-O-methylcytidine(1402) in 16S rRNA + S-adenosyl-L-homocysteine + H(+). Functionally, catalyzes the 2'-O-methylation of the ribose of cytidine 1402 (C1402) in 16S rRNA. This Streptococcus pyogenes serotype M1 protein is Ribosomal RNA small subunit methyltransferase I.